The chain runs to 142 residues: Large ribosomal subunit protein uL11 (142 aa).

This sequence belongs to the universal ribosomal protein uL11 family. In terms of assembly, part of the ribosomal stalk of the 50S ribosomal subunit. Interacts with L10 and the large rRNA to form the base of the stalk. L10 forms an elongated spine to which L12 dimers bind in a sequential fashion forming a multimeric L10(L12)X complex. Post-translationally, one or more lysine residues are methylated.

In terms of biological role, forms part of the ribosomal stalk which helps the ribosome interact with GTP-bound translation factors. This is Large ribosomal subunit protein uL11 from Shewanella loihica (strain ATCC BAA-1088 / PV-4).